A 575-amino-acid polypeptide reads, in one-letter code: G protein-coupled receptor kinase 4 (575 aa).

Met1 carries the post-translational modification N-acetylmethionine. The N-terminal stretch occupies residues Met1 to Leu153. The RGS domain maps to Asp51–Leu171. The 263-residue stretch at Phe186–Phe448 folds into the Protein kinase domain. ATP is bound by residues Leu192–Val200 and Lys215. The active-site Proton acceptor is Asp311. In terms of domain architecture, AGC-kinase C-terminal spans Lys449–Glu514. At Ser484 the chain carries Phosphoserine.

It belongs to the protein kinase superfamily. AGC Ser/Thr protein kinase family. GPRK subfamily. As to quaternary structure, interacts with DRD3. Post-translationally, palmitoylated. Isoform GRK4A is expressed in testis. Isoform GRK4B is heterogeneously distributed in the kidney, with 20-fold enrichment in the outer medulla. Has a widespread but low level of expression in tissues other than testis.

The protein localises to the cytoplasm. The protein resides in the cell cortex. It catalyses the reaction [G-protein-coupled receptor] + ATP = [G-protein-coupled receptor]-phosphate + ADP + H(+). With respect to regulation, inhibited by heparin. Functionally, specifically phosphorylates the activated forms of G protein-coupled receptors. Plays an important role in the regulation of renal sodium handling and blood pressure. This is G protein-coupled receptor kinase 4 (Grk4) from Rattus norvegicus (Rat).